Consider the following 1322-residue polypeptide: Serine/threonine-protein kinase TIO (1322 aa).

One can recognise a Protein kinase domain in the interval 6–256; the sequence is YHVIELVGEG…WPALREHPFV (251 aa). ATP-binding positions include 12–20 and lysine 35; that span reads VGEGSFGRV. Aspartate 127 acts as the Proton acceptor in catalysis. The interval 1000-1322 is required for the binding to Kinesin-12 members; sequence CMEDRDLLKA…VIVAKVSGES (323 aa). ARM repeat units lie at residues 1056 to 1098, 1101 to 1140, 1143 to 1182, 1183 to 1223, 1226 to 1273, and 1281 to 1320; these read PRLA…DLSR, KAFYKYIGEASVLQPLKEYLTHVDPNIRAKACSALGNMCR, GYFYSALAEHQIIGLLIDRCADPDKRTQKFACFAIGNAAY, HNDT…NLVR, NKLC…LFSL, and QICRQFVKSSELFPVIARLKQSPEANIAHYASVIVAKVSG.

It belongs to the protein kinase superfamily. Ser/Thr protein kinase family. As to quaternary structure, interacts with Kinesin-12 members KIN12A/PAKRP1 and KIN12B/PAKRP1L. Interacts with KIN7B/NACK2. In terms of tissue distribution, ubiquitous.

It localises to the cytoplasm. Its subcellular location is the cytoskeleton. It is found in the phragmoplast. The enzyme catalyses L-seryl-[protein] + ATP = O-phospho-L-seryl-[protein] + ADP + H(+). It catalyses the reaction L-threonyl-[protein] + ATP = O-phospho-L-threonyl-[protein] + ADP + H(+). Plays a role in conventional modes of cytokinesis in meristems and during male gametogenesis but also acts in nonconventional modes of cytokinesis (cellularization) during female gametogenesis. Constitutes a signaling module in association with Kinesin-12 members that is required to support phragmoplast expansion and cell-plate growth in plant cells. This is Serine/threonine-protein kinase TIO (TIO) from Arabidopsis thaliana (Mouse-ear cress).